A 252-amino-acid chain; its full sequence is Thiazole synthase (252 aa).

The active-site Schiff-base intermediate with DXP is Lys98. Residues Gly159, 185–186 (AG), and 207–208 (AS) each bind 1-deoxy-D-xylulose 5-phosphate.

It belongs to the ThiG family. In terms of assembly, homotetramer. Forms heterodimers with either ThiH or ThiS.

The protein localises to the cytoplasm. The enzyme catalyses [ThiS sulfur-carrier protein]-C-terminal-Gly-aminoethanethioate + 2-iminoacetate + 1-deoxy-D-xylulose 5-phosphate = [ThiS sulfur-carrier protein]-C-terminal Gly-Gly + 2-[(2R,5Z)-2-carboxy-4-methylthiazol-5(2H)-ylidene]ethyl phosphate + 2 H2O + H(+). It functions in the pathway cofactor biosynthesis; thiamine diphosphate biosynthesis. Catalyzes the rearrangement of 1-deoxy-D-xylulose 5-phosphate (DXP) to produce the thiazole phosphate moiety of thiamine. Sulfur is provided by the thiocarboxylate moiety of the carrier protein ThiS. In vitro, sulfur can be provided by H(2)S. In Mycobacterium tuberculosis (strain ATCC 25177 / H37Ra), this protein is Thiazole synthase.